A 215-amino-acid polypeptide reads, in one-letter code: 3-isopropylmalate dehydratase small subunit (215 aa).

This sequence belongs to the LeuD family. LeuD type 1 subfamily. In terms of assembly, heterodimer of LeuC and LeuD.

It catalyses the reaction (2R,3S)-3-isopropylmalate = (2S)-2-isopropylmalate. The protein operates within amino-acid biosynthesis; L-leucine biosynthesis; L-leucine from 3-methyl-2-oxobutanoate: step 2/4. Functionally, catalyzes the isomerization between 2-isopropylmalate and 3-isopropylmalate, via the formation of 2-isopropylmaleate. The chain is 3-isopropylmalate dehydratase small subunit from Ectopseudomonas mendocina (strain ymp) (Pseudomonas mendocina).